Here is a 737-residue protein sequence, read N- to C-terminus: 1,4-alpha-glucan branching enzyme GlgB (737 aa).

Asp-419 serves as the catalytic Nucleophile. Glu-472 acts as the Proton donor in catalysis.

The protein belongs to the glycosyl hydrolase 13 family. GlgB subfamily. As to quaternary structure, monomer.

It carries out the reaction Transfers a segment of a (1-&gt;4)-alpha-D-glucan chain to a primary hydroxy group in a similar glucan chain.. Its pathway is glycan biosynthesis; glycogen biosynthesis. Its function is as follows. Catalyzes the formation of the alpha-1,6-glucosidic linkages in glycogen by scission of a 1,4-alpha-linked oligosaccharide from growing alpha-1,4-glucan chains and the subsequent attachment of the oligosaccharide to the alpha-1,6 position. This Cellvibrio japonicus (strain Ueda107) (Pseudomonas fluorescens subsp. cellulosa) protein is 1,4-alpha-glucan branching enzyme GlgB.